The primary structure comprises 812 residues: Lon protease (812 aa).

The region spanning 11 to 204 (IPVLPLRDVV…YLMAMMESEI (194 aa)) is the Lon N-terminal domain. Residue 356–363 (GPPGVGKT) participates in ATP binding. Residues 592–773 (ENRVGQVTGL…EEEQTLSLQN (182 aa)) form the Lon proteolytic domain. Active-site residues include S679 and K722. Basic and acidic residues predominate over residues 745–764 (KENPDNAKADQDRHPVKNNE). The tract at residues 745–766 (KENPDNAKADQDRHPVKNNEEE) is disordered.

It belongs to the peptidase S16 family. As to quaternary structure, homohexamer. Organized in a ring with a central cavity. ATP binding and hydrolysis do not affect the oligomeric state of the enzyme.

The protein resides in the cytoplasm. The catalysed reaction is Hydrolysis of proteins in presence of ATP.. Contains an allosteric site (distinct from its active site), whose occupancy by an unfolded polypeptide leads to enzyme activation. In terms of biological role, ATP-dependent serine protease that mediates the selective degradation of mutant and abnormal proteins as well as certain short-lived regulatory proteins. Required for cellular homeostasis and for survival from DNA damage and developmental changes induced by stress. Degrades polypeptides processively to yield small peptide fragments that are 5 to 10 amino acids long. Binds to DNA in a double-stranded, site-specific manner. Endogenous substrates include the regulatory proteins RcsA and SulA, the transcriptional activator SoxS, and UmuD. Its overproduction specifically inhibits translation through at least two different pathways, one of them being the YoeB-YefM toxin-antitoxin system. The chain is Lon protease from Shigella dysenteriae serotype 1 (strain Sd197).